The primary structure comprises 387 residues: MTITTSEATSHTLGGPIRVMVVDDSAVVRGLETRMLEEDPAIQVVASVGNGQMAVQALDRHDIEVVILDIEMPVMDGLTALPELLRKSPNLKVIMASTLTLRNAEVTLKALQMGASECLAKPTTSREISGGTDFRHDLVEKVKALGGARRRALGRAAPTARAGGAVVERKVGALPSLMAQRAQQPISLRPAAEERPDIIAIGSSTGGPQALFTVFGDMRKGGWPSQPIVVTQHMPATFTTILAGHIERVAGVPTAEAKDGDPIRGGHIYIAPGDYHMVVETRGTEKILRLNQDPPESFCRPAVDPLFRSVAKAYGRRVLAVVLTGMGADGSKGGKIIAESGGTVIAQDEPSSVVWGMPGATAQIGACSAVLPLKDIAAYVLRSANKR.

Positions 18 to 136 constitute a Response regulatory domain; it reads RVMVVDDSAV…EISGGTDFRH (119 aa). Position 69 is a 4-aspartylphosphate (Asp69). In terms of domain architecture, CheB-type methylesterase spans 190–387; it reads PAAEERPDII…AYVLRSANKR (198 aa). Catalysis depends on residues Ser204, His233, and Asp329.

It belongs to the CheB family. Post-translationally, phosphorylated by CheA. Phosphorylation of the N-terminal regulatory domain activates the methylesterase activity.

Its subcellular location is the cytoplasm. The enzyme catalyses [protein]-L-glutamate 5-O-methyl ester + H2O = L-glutamyl-[protein] + methanol + H(+). The catalysed reaction is L-glutaminyl-[protein] + H2O = L-glutamyl-[protein] + NH4(+). In terms of biological role, involved in chemotaxis. Part of a chemotaxis signal transduction system that modulates chemotaxis in response to various stimuli. Catalyzes the demethylation of specific methylglutamate residues introduced into the chemoreceptors (methyl-accepting chemotaxis proteins or MCP) by CheR. Also mediates the irreversible deamidation of specific glutamine residues to glutamic acid. This is Protein-glutamate methylesterase/protein-glutamine glutaminase 1 from Rhodospirillum rubrum (strain ATCC 11170 / ATH 1.1.1 / DSM 467 / LMG 4362 / NCIMB 8255 / S1).